The chain runs to 146 residues: Hemoglobin subunit beta-A/B (146 aa).

The residue at position 1 (Gly1) is an N-acetylserine; in variant beta-B. In terms of domain architecture, Globin spans 2–146 (FLTAEEKGLV…VANALAHKYH (145 aa)). Ser44 carries the post-translational modification Phosphoserine. N6-acetyllysine is present on Lys59. Residue His63 participates in heme b binding. An N6-acetyllysine modification is found at Lys82. His92 provides a ligand contact to heme b. Cys93 carries the S-nitrosocysteine modification. Residue Lys144 is modified to N6-acetyllysine.

The protein belongs to the globin family. In terms of assembly, heterotetramer of two alpha chains and two beta chains. As to expression, red blood cells.

Its function is as follows. Involved in oxygen transport from the lung to the various peripheral tissues. The chain is Hemoglobin subunit beta-A/B (HBB) from Felis catus (Cat).